Here is a 181-residue protein sequence, read N- to C-terminus: Large ribosomal subunit protein uL5c (181 aa).

It belongs to the universal ribosomal protein uL5 family. In terms of assembly, part of the 50S ribosomal subunit; contacts the 5S rRNA.

It localises to the plastid. The protein localises to the cyanelle. Binds 5S rRNA, forms part of the central protuberance of the 50S subunit. The protein is Large ribosomal subunit protein uL5c (rpl5) of Cyanophora paradoxa.